A 333-amino-acid polypeptide reads, in one-letter code: Geminin coiled-coil domain-containing protein 1 (333 aa).

Residues 83–118 (QLYRNKQLQDTLLQKEEELARLHEENNHLRQYLNST) are a coiled coil. Residues 145 to 154 (KEKRKPKEHR) are compositionally biased toward basic residues. The interval 145–165 (KEKRKPKEHRHSPAEIPQFKT) is disordered.

This sequence belongs to the GEMC1 family. Highly phosphorylated by CDK2; stimulates initiation of DNA replication.

It localises to the nucleus. In terms of biological role, regulator of DNA replication. Promotes initiation of chromosomal DNA replication by mediating TOPBP1- and CDK2-dependent recruitment of CDC45L onto replication origins. This is Geminin coiled-coil domain-containing protein 1 (Gmnc) from Mus musculus (Mouse).